The sequence spans 275 residues: 2,3,4,5-tetrahydropyridine-2,6-dicarboxylate N-succinyltransferase (275 aa).

The substrate site is built by Arg106 and Asp143.

Belongs to the transferase hexapeptide repeat family. As to quaternary structure, homotrimer.

It is found in the cytoplasm. The catalysed reaction is (S)-2,3,4,5-tetrahydrodipicolinate + succinyl-CoA + H2O = (S)-2-succinylamino-6-oxoheptanedioate + CoA. The protein operates within amino-acid biosynthesis; L-lysine biosynthesis via DAP pathway; LL-2,6-diaminopimelate from (S)-tetrahydrodipicolinate (succinylase route): step 1/3. This Rickettsia bellii (strain RML369-C) protein is 2,3,4,5-tetrahydropyridine-2,6-dicarboxylate N-succinyltransferase.